The sequence spans 626 residues: Putative Xaa-Pro dipeptidyl-peptidase (626 aa).

Residues S231, D348, and H379 each act as charge relay system in the active site.

The protein belongs to the peptidase S15 family.

The enzyme catalyses Hydrolyzes Xaa-Pro-|- bonds to release unblocked, N-terminal dipeptides from substrates including Ala-Pro-|-p-nitroanilide and (sequentially) Tyr-Pro-|-Phe-Pro-|-Gly-Pro-|-Ile.. The polypeptide is Putative Xaa-Pro dipeptidyl-peptidase (Rhodopirellula baltica (strain DSM 10527 / NCIMB 13988 / SH1)).